Reading from the N-terminus, the 146-residue chain is uncharacterized protein (146 aa).

The region spanning 7 to 146 is the N-acetyltransferase domain; sequence LQINYKTDEL…EGHDILIWNP (140 aa).

This is an uncharacterized protein from Staphylococcus epidermidis (strain ATCC 12228 / FDA PCI 1200).